Reading from the N-terminus, the 208-residue chain is Predicted GPI-anchored protein 37 (208 aa).

The signal sequence occupies residues 1-18 (MLFTQLIILLTVTSQALS). Residues 33–93 (TKRLGGGSRG…SSSSSGSRNW (61 aa)) are disordered. Positions 36–53 (LGGGSRGGSSSGSRGGSS) are enriched in gly residues. The span at 54-63 (SGSSSGSSSG) shows a compositional bias: low complexity. Asparagine 173 carries N-linked (GlcNAc...) asparagine glycosylation. Serine 185 is lipidated: GPI-anchor amidated serine. Positions 186 to 208 (SSLNIPSTHFYLIGFAAAYSIVL) are cleaved as a propeptide — removed in mature form.

The protein belongs to the PGA37 family.

The protein resides in the cell membrane. In terms of biological role, predicted GPI-anchored protein which may have a role during host infection. In Candida albicans (strain SC5314 / ATCC MYA-2876) (Yeast), this protein is Predicted GPI-anchored protein 37 (PGA37).